Reading from the N-terminus, the 141-residue chain is Hemoglobin subunit alpha-A (141 aa).

In terms of domain architecture, Globin spans Val-1 to Arg-141. His-58 serves as a coordination point for O2. Position 87 (His-87) interacts with heme b.

It belongs to the globin family. As to quaternary structure, heterotetramer of two alpha chains and two beta chains. As to expression, red blood cells.

Involved in oxygen transport from the lung to the various peripheral tissues. This chain is Hemoglobin subunit alpha-A (HBAA), found in Sturnus vulgaris (Starling).